The chain runs to 93 residues: Small ribosomal subunit protein uS17 (93 aa).

It belongs to the universal ribosomal protein uS17 family. As to quaternary structure, part of the 30S ribosomal subunit.

One of the primary rRNA binding proteins, it binds specifically to the 5'-end of 16S ribosomal RNA. The polypeptide is Small ribosomal subunit protein uS17 (Corynebacterium aurimucosum (strain ATCC 700975 / DSM 44827 / CIP 107346 / CN-1) (Corynebacterium nigricans)).